The following is a 93-amino-acid chain: Protein translocase subunit SecE (93 aa).

The interval 1 to 33 (MTDALGSIDMPDAEDETREKKARKGGKRGKKGP) is disordered. Over residues 20-33 (KKARKGGKRGKKGP) the composition is skewed to basic residues. Residues 64–84 (TVVIVFVVIMIGLVTVIDFGF) traverse the membrane as a helical segment.

This sequence belongs to the SecE/SEC61-gamma family. As to quaternary structure, component of the Sec protein translocase complex. Heterotrimer consisting of SecY, SecE and SecG subunits. The heterotrimers can form oligomers, although 1 heterotrimer is thought to be able to translocate proteins. Interacts with the ribosome. Interacts with SecDF, and other proteins may be involved. Interacts with SecA.

It is found in the cell membrane. In terms of biological role, essential subunit of the Sec protein translocation channel SecYEG. Clamps together the 2 halves of SecY. May contact the channel plug during translocation. This chain is Protein translocase subunit SecE, found in Streptomyces virginiae (Streptomyces cinnamonensis).